Consider the following 208-residue polypeptide: UPF0637 protein BCQ_3749 (208 aa).

This sequence belongs to the UPF0637 family.

The sequence is that of UPF0637 protein BCQ_3749 from Bacillus cereus (strain Q1).